The following is a 500-amino-acid chain: Probable cytosol aminopeptidase (500 aa).

Residues Lys264 and Asp269 each contribute to the Mn(2+) site. Lys276 is a catalytic residue. Mn(2+) contacts are provided by Asp287, Asp346, and Glu348. Residue Arg350 is part of the active site.

Belongs to the peptidase M17 family. Mn(2+) serves as cofactor.

It localises to the cytoplasm. The catalysed reaction is Release of an N-terminal amino acid, Xaa-|-Yaa-, in which Xaa is preferably Leu, but may be other amino acids including Pro although not Arg or Lys, and Yaa may be Pro. Amino acid amides and methyl esters are also readily hydrolyzed, but rates on arylamides are exceedingly low.. It catalyses the reaction Release of an N-terminal amino acid, preferentially leucine, but not glutamic or aspartic acids.. Presumably involved in the processing and regular turnover of intracellular proteins. Catalyzes the removal of unsubstituted N-terminal amino acids from various peptides. In Afipia carboxidovorans (strain ATCC 49405 / DSM 1227 / KCTC 32145 / OM5) (Oligotropha carboxidovorans), this protein is Probable cytosol aminopeptidase.